The sequence spans 222 residues: Small ribosomal subunit protein uS3 (222 aa).

The 69-residue stretch at 39–107 folds into the KH type-2 domain; sequence VREFLHKKLA…PVQINIEEVR (69 aa).

It belongs to the universal ribosomal protein uS3 family. Part of the 30S ribosomal subunit. Forms a tight complex with proteins S10 and S14.

Binds the lower part of the 30S subunit head. Binds mRNA in the 70S ribosome, positioning it for translation. The polypeptide is Small ribosomal subunit protein uS3 (Francisella tularensis subsp. tularensis (strain FSC 198)).